Consider the following 703-residue polypeptide: uncharacterized protein (703 aa).

4 consecutive transmembrane segments (helical) span residues 23–43, 69–89, 143–163, and 250–270; these read IAMS…DFLI, ALSG…AAGG, PVIS…ALEA, and PPEW…PIGL. One can recognise a PNPLA domain in the interval 23 to 335; it reads IAMSGAISAG…INNDPFEFVR (313 aa). Residues 72 to 76 carry the GXSXG motif; it reads GASAG. Catalysis depends on serine 74, which acts as the Nucleophile. The active-site Proton acceptor is the aspartate 322. The short motif at 322–324 is the DGA/G element; it reads DGG. 3 helical membrane passes run 357 to 377, 432 to 452, and 644 to 664; these read VIMI…EPPL, ETFS…LEAF, and ILST…APWT.

The protein localises to the cell membrane. This is an uncharacterized protein from Sinorhizobium fredii (strain NBRC 101917 / NGR234).